We begin with the raw amino-acid sequence, 342 residues long: Ornithine carbamoyltransferase, catabolic (342 aa).

Carbamoyl phosphate contacts are provided by residues 59–62, Ser83, Arg110, and 137–140; these read STRT and HPTQ. L-ornithine contacts are provided by residues Asn169, Asp235, and 239-240; that span reads SL. Carbamoyl phosphate-binding positions include 276-277 and Arg328; that span reads CL.

This sequence belongs to the aspartate/ornithine carbamoyltransferase superfamily. OTCase family. In terms of assembly, dodecamer (tetramer of trimers).

It is found in the cytoplasm. The enzyme catalyses carbamoyl phosphate + L-ornithine = L-citrulline + phosphate + H(+). Its pathway is amino-acid degradation; L-arginine degradation via ADI pathway; carbamoyl phosphate from L-arginine: step 2/2. Nvolved in the catabolism of arginine. Catalyzes the phosphorolysis of citrulline, the reverse reaction of the biosynthetic one, yielding ornithine and carbamoyl phosphate which serve to generate ATP from ADP. The chain is Ornithine carbamoyltransferase, catabolic (arcB) from Malacoplasma penetrans (strain HF-2) (Mycoplasma penetrans).